The primary structure comprises 366 residues: NADH-quinone oxidoreductase subunit D (366 aa).

Belongs to the complex I 49 kDa subunit family. As to quaternary structure, NDH-1 is composed of 14 different subunits. Subunits NuoB, C, D, E, F, and G constitute the peripheral sector of the complex.

The protein localises to the cell membrane. The catalysed reaction is a quinone + NADH + 5 H(+)(in) = a quinol + NAD(+) + 4 H(+)(out). In terms of biological role, NDH-1 shuttles electrons from NADH, via FMN and iron-sulfur (Fe-S) centers, to quinones in the respiratory chain. The immediate electron acceptor for the enzyme in this species is believed to be a menaquinone. Couples the redox reaction to proton translocation (for every two electrons transferred, four hydrogen ions are translocated across the cytoplasmic membrane), and thus conserves the redox energy in a proton gradient. The protein is NADH-quinone oxidoreductase subunit D of Bacillus thuringiensis subsp. konkukian (strain 97-27).